The sequence spans 238 residues: Uridylate kinase (238 aa).

12–15 (KLSG) is an ATP binding site. Position 54 (Gly-54) interacts with UMP. Residues Gly-55 and Arg-59 each contribute to the ATP site. Residues Asp-74 and 135 to 142 (TGNPYFTT) each bind UMP. The ATP site is built by Thr-162, Tyr-168, and Asp-171.

This sequence belongs to the UMP kinase family. Homohexamer.

It localises to the cytoplasm. The catalysed reaction is UMP + ATP = UDP + ADP. Its pathway is pyrimidine metabolism; CTP biosynthesis via de novo pathway; UDP from UMP (UMPK route): step 1/1. With respect to regulation, inhibited by UTP. Its function is as follows. Catalyzes the reversible phosphorylation of UMP to UDP. The sequence is that of Uridylate kinase from Oleidesulfovibrio alaskensis (strain ATCC BAA-1058 / DSM 17464 / G20) (Desulfovibrio alaskensis).